We begin with the raw amino-acid sequence, 157 residues long: MQLTVKALQGRECSLQVPEDELVSTLKQLVSEKLNVPVRQQRLLFKGKALADGKRLSDYSIGPNSKLNLVVKPLEKVLLEEGEAQRLADSPPPQVWQLISKVLARHFSAADASRVLEQLQRDYERSLSRLTLDDIERLASRFLHPEVTETMEKGFSK.

In terms of domain architecture, Ubiquitin-like spans 1–76 (MQLTVKALQG…LNLVVKPLEK (76 aa)). Lysine 48 is covalently cross-linked (Glycyl lysine isopeptide (Lys-Gly) (interchain with G-Cter in ubiquitin)). Serine 90 carries the post-translational modification Phosphoserine. The required and sufficient for interaction with BAG6 stretch occupies residues 96–138 (WQLISKVLARHFSAADASRVLEQLQRDYERSLSRLTLDDIERL).

As to quaternary structure, component of the BAG6/BAT3 complex, at least composed of BAG6, UBL4A and GET4/TRC35. Interacts with BAG6; the interaction is direct and required for UBL4A protein stability. Interacts with USP13; may be indirect via BAG6. Post-translationally, polyubiquitinated. Ubiquitination by AMFR and deubiquitination by USP13 may regulate the interaction between the BAG6/BAT3 complex and SGTA and therefore may regulate client proteins fate.

It localises to the cytoplasm. Its subcellular location is the cytosol. The protein resides in the nucleus. As part of a cytosolic protein quality control complex, the BAG6/BAT3 complex, maintains misfolded and hydrophobic patches-containing proteins in a soluble state and participates in their proper delivery to the endoplasmic reticulum or alternatively can promote their sorting to the proteasome where they undergo degradation. The BAG6/BAT3 complex is involved in the post-translational delivery of tail-anchored/type II transmembrane proteins to the endoplasmic reticulum membrane. Recruited to ribosomes, it interacts with the transmembrane region of newly synthesized tail-anchored proteins and together with SGTA and ASNA1 mediates their delivery to the endoplasmic reticulum. Client proteins that cannot be properly delivered to the endoplasmic reticulum are ubiquitinated and sorted to the proteasome. Similarly, the BAG6/BAT3 complex also functions as a sorting platform for proteins of the secretory pathway that are mislocalized to the cytosol either delivering them to the proteasome for degradation or to the endoplasmic reticulum. The BAG6/BAT3 complex also plays a role in the endoplasmic reticulum-associated degradation (ERAD), a quality control mechanism that eliminates unwanted proteins of the endoplasmic reticulum through their retrotranslocation to the cytosol and their targeting to the proteasome. It maintains these retrotranslocated proteins in an unfolded yet soluble state condition in the cytosol to ensure their proper delivery to the proteasome. The sequence is that of Ubiquitin-like protein 4A from Homo sapiens (Human).